We begin with the raw amino-acid sequence, 458 residues long: Morphogenetic regulator of filamentous growth protein 1 (458 aa).

Residues 401-458 (KKDSGSEPLHAKRRRNSGISPRTTTLGPNGNSNTSNEELPTSDVNDINKDMTKKKMKF) form a disordered region. Positions 417–445 (SGISPRTTTLGPNGNSNTSNEELPTSDVN) are enriched in polar residues. Over residues 446-458 (DINKDMTKKKMKF) the composition is skewed to basic and acidic residues.

Belongs to the MFG1 family. Interacts with FLO8 and MSS11, both morphogenetic transcription factors binding directly to the FLO11 promoter.

It is found in the nucleus. Its function is as follows. Transcriptional regulator with a general role in all morphogenetically distinct forms of filamentous growth, namely haploid invasive growth, biofilm formation, and diploid pseudohyphal growth. May control FLO11 gene expression as part of a promoter-bound complex with FLO8 and MSS1. This chain is Morphogenetic regulator of filamentous growth protein 1 (MFG1), found in Saccharomyces cerevisiae (strain ATCC 204508 / S288c) (Baker's yeast).